We begin with the raw amino-acid sequence, 209 residues long: Ras-like protein (209 aa).

10 to 17 is a GTP binding site; it reads GGGLVGKS. The Effector region motif lies at 55 to 63; the sequence is YDPTVEDSR. Threonine 58 carries the phosphothreonine modification. GTP is bound by residues 79–83 and 140–143; these read DTAGQ and NKAD. Position 206 is a cysteine methyl ester (cysteine 206). Cysteine 206 carries the S-geranylgeranyl cysteine lipid modification. Positions 207-209 are cleaved as a propeptide — removed in mature form; that stretch reads LII.

It belongs to the small GTPase superfamily. Ras family. In terms of processing, phosphorylated in the presence of insulin.

It localises to the cell membrane. The catalysed reaction is GTP + H2O = GDP + phosphate + H(+). With respect to regulation, alternates between an inactive form bound to GDP and an active form bound to GTP. Activated by a guanine nucleotide-exchange factor (GEF) and inactivated by a GTPase-activating protein (GAP). In terms of biological role, this protein is activated by the insulin/insulin (insulin-like)-receptor system. This transition enables the ras protein to interact with the lectin-receptor/lectin complex, a process which ultimately lead to an initiation of an intra-cellular signal-transduction chain. This chain is Ras-like protein, found in Geodia cydonium (Sponge).